The following is a 780-amino-acid chain: Protein phosphatase 1 regulatory subunit 21 (780 aa).

2 coiled-coil regions span residues 1-207 (MASA…LKTL) and 556-607 (ESRE…LKNT). The tract at residues 84-104 (EPRGKKNKKSGESSSQLSQEQ) is disordered. Residues 95-104 (ESSSQLSQEQ) show a composition bias toward low complexity. Threonine 652 bears the Phosphothreonine mark. A coiled-coil region spans residues 693-742 (YAECRALSKRLALAEKSKEALTEEMKLASQNISRLQDELTTTKRSYEDQL). The interval 760-780 (REEIDTLKMSSKGNSKKNKSR) is disordered.

Component of the FERRY complex, composed of five subunits: TBCK, PPP1R21, FERRY3, CRYZL1 and GATAD1, with a ratio of 1:2:1:2:4 respectively. PPP1R21 serves as a binding hub connecting all five complex subunits to mediate the binding to specific mitochondrial mRNAs. Interacts with the GTP-bound form of RAB5A (via its C-terminal region); linking the mRNP complex onto trafficking endosomes for active mRNA transport. Interacts with PPP1CA.

Its subcellular location is the early endosome. Functionally, component of the FERRY complex (Five-subunit Endosomal Rab5 and RNA/ribosome intermediary). The FERRY complex directly interacts with mRNAs and RAB5A, and functions as a RAB5A effector involved in the localization and the distribution of specific mRNAs most likely by mediating their endosomal transport. The complex recruits mRNAs and ribosomes to early endosomes through direct mRNA-interaction. In the complex, PPP1R21 serves as a binding hub connecting all five complex subunits and mediating the binding to mRNA and early endosomes via RAB5A. Putative regulator of protein phosphatase 1 (PP1) activity. May play a role in the endosomal sorting process or in endosome maturation pathway. This is Protein phosphatase 1 regulatory subunit 21 (PPP1R21) from Homo sapiens (Human).